The chain runs to 658 residues: Threonine--tRNA ligase (658 aa).

Residues 1-61 (MIELVFPDGS…EKGGAFKILT (61 aa)) enclose the TGS domain. Residues 243–535 (DHRKLGRQMD…LIENYAGAFP (293 aa)) are catalytic. Zn(2+)-binding residues include cysteine 335, histidine 386, and histidine 512.

This sequence belongs to the class-II aminoacyl-tRNA synthetase family. As to quaternary structure, homodimer. Zn(2+) is required as a cofactor.

It localises to the cytoplasm. The enzyme catalyses tRNA(Thr) + L-threonine + ATP = L-threonyl-tRNA(Thr) + AMP + diphosphate + H(+). Its function is as follows. Catalyzes the attachment of threonine to tRNA(Thr) in a two-step reaction: L-threonine is first activated by ATP to form Thr-AMP and then transferred to the acceptor end of tRNA(Thr). Also edits incorrectly charged L-seryl-tRNA(Thr). The chain is Threonine--tRNA ligase from Phenylobacterium zucineum (strain HLK1).